A 965-amino-acid polypeptide reads, in one-letter code: Receptor-like protein 15 (965 aa).

The N-terminal stretch at 1–23 (MEGKVFLGHNLIWVMLLMGQLHG) is a signal peptide. Residues 24 to 916 (YKSCIDEEKI…GVEADESIID (893 aa)) are Extracellular-facing. Residues N57, N95, N109, and N145 are each glycosylated (N-linked (GlcNAc...) asparagine). LRR repeat units lie at residues 80–102 (EISF…LHPF), 103–127 (EDVR…GYKS), 131–154 (LRKL…FLSA), 156–179 (TSLT…ELRD), 180–204 (LTNL…ELSS), 206–230 (RKLK…KFCT), 243–267 (LNNM…LTSL), 268–290 (TGLR…SLGS), 292–315 (QSLE…SLAN), 316–341 (LSNL…SWKP), 342–365 (KFQL…LLHQ), 366–389 (KDLR…LLAN), 391–415 (TKLK…AHNL), 417–435 (FLDV…NIGW), 437–461 (FPHL…LGNM), 462–485 (NGIQ…FVNG), and 487–512 (YSMA…NFTN). N-linked (GlcNAc...) asparagine glycosylation is present at N194. Residue N315 is glycosylated (N-linked (GlcNAc...) asparagine). N-linked (GlcNAc...) asparagine glycosylation is found at N377 and N389. An N-linked (GlcNAc...) asparagine glycan is attached at N444. Residue N509 is glycosylated (N-linked (GlcNAc...) asparagine). Residues 514-533 (LGLFMDNNLFTGKIGQGLRS) form an LRR 18; degenerate repeat. 11 LRR repeats span residues 534–557 (LINL…WIGE), 558–582 (LPSL…LFNK), 584–606 (SLQL…HDSR), 608–627 (GVVL…DTLL), 628–652 (ANVE…NIQN), 654–674 (SILL…LCGL), 675–698 (SNIQ…LSNT), 778–801 (LKLL…EFGG), 802–825 (LLEL…SISS), 827–850 (EKME…LTEL), and 851–875 (TSLS…QFNT). 2 N-linked (GlcNAc...) asparagine glycosylation sites follow: N546 and N581. N652, N662, N688, and N697 each carry an N-linked (GlcNAc...) asparagine glycan. N-linked (GlcNAc...) asparagine glycans are attached at residues N809 and N814. 3 N-linked (GlcNAc...) asparagine glycosylation sites follow: N862, N893, and N898. Residues 917–937 (MVSFYLSFAAAYVTILIGILA) form a helical membrane-spanning segment. Residues 938–965 (SLSFDSPWSRFWFYKVDAFIKKVRNLLL) lie on the Cytoplasmic side of the membrane.

This sequence belongs to the RLP family.

The protein localises to the cell membrane. The protein is Receptor-like protein 15 of Arabidopsis thaliana (Mouse-ear cress).